We begin with the raw amino-acid sequence, 250 residues long: Ribosomal RNA small subunit methyltransferase J (250 aa).

S-adenosyl-L-methionine contacts are provided by residues 101-102 (RD), 117-118 (ER), 153-154 (SS), and D171.

The protein belongs to the methyltransferase superfamily. RsmJ family.

The protein resides in the cytoplasm. It catalyses the reaction guanosine(1516) in 16S rRNA + S-adenosyl-L-methionine = N(2)-methylguanosine(1516) in 16S rRNA + S-adenosyl-L-homocysteine + H(+). Specifically methylates the guanosine in position 1516 of 16S rRNA. In Escherichia fergusonii (strain ATCC 35469 / DSM 13698 / CCUG 18766 / IAM 14443 / JCM 21226 / LMG 7866 / NBRC 102419 / NCTC 12128 / CDC 0568-73), this protein is Ribosomal RNA small subunit methyltransferase J.